A 122-amino-acid polypeptide reads, in one-letter code: uncharacterized protein (122 aa).

This is an uncharacterized protein from Homo sapiens (Human).